Reading from the N-terminus, the 172-residue chain is uncharacterized protein (172 aa).

This is an uncharacterized protein from Treponema pallidum (strain Nichols).